A 107-amino-acid chain; its full sequence is L-rhamnose mutarotase (107 aa).

Tyr18 is a binding site for substrate. The active-site Proton donor is the His22. Residues Tyr41 and 76–77 (WW) contribute to the substrate site.

Belongs to the rhamnose mutarotase family. Homodimer.

It localises to the cytoplasm. The enzyme catalyses alpha-L-rhamnose = beta-L-rhamnose. The protein operates within carbohydrate metabolism; L-rhamnose metabolism. Its function is as follows. Involved in the anomeric conversion of L-rhamnose. This chain is L-rhamnose mutarotase, found in Paraburkholderia phytofirmans (strain DSM 17436 / LMG 22146 / PsJN) (Burkholderia phytofirmans).